We begin with the raw amino-acid sequence, 548 residues long: MFS-rype transporter paaT (548 aa).

Basic and acidic residues predominate over residues 1–10; that stretch reads MEAPRSDQAH. Positions 1–32 are disordered; it reads MEAPRSDQAHTDATTPMEAIRTTSLGTNNYGP. Residues 21–30 show a composition bias toward polar residues; that stretch reads RTTSLGTNNY. 2 N-linked (GlcNAc...) asparagine glycosylation sites follow: Asn70 and Asn93. 12 helical membrane passes run 100-120, 139-159, 174-194, 197-217, 224-244, 256-276, 332-352, 370-390, 411-431, 436-456, 471-493, and 505-525; these read WYCT…SSVI, LVVI…FAPM, ALAV…TLIV, LIDG…LADL, GVPM…GPLV, WLYW…TFTV, IVLF…MFFV, GLMF…APFV, LIPM…FAWT, LHWM…ILLY, AASA…VLFT, and ASTL…VFYF. The short motif at 258-269 is the Peroxisomal targeting signal element; the sequence is YWIQLILAFVAW.

This sequence belongs to the major facilitator superfamily. DHA1 family. Polyamines/proton antiporter (TC 2.A.1.2.16) subfamily.

Its subcellular location is the peroxisome membrane. Its function is as follows. MFS-type transporter involved in penicillin production, most likely through the translocation of side-chain precursors (phenylacetic acid and phenoxyacetic acid) from the cytosol to the peroxisomal lumen across the peroxisomal membrane. This is MFS-rype transporter paaT from Penicillium rubens (strain ATCC 28089 / DSM 1075 / NRRL 1951 / Wisconsin 54-1255) (Penicillium chrysogenum).